The primary structure comprises 206 residues: Large ribosomal subunit protein uL4 (206 aa).

A disordered region spans residues 63 to 93; it reads MYKQKGTGRARHHSARAPQFRGGGKAHGPVV. Over residues 64–77 the composition is skewed to basic residues; it reads YKQKGTGRARHHSA.

It belongs to the universal ribosomal protein uL4 family. In terms of assembly, part of the 50S ribosomal subunit.

Functionally, one of the primary rRNA binding proteins, this protein initially binds near the 5'-end of the 23S rRNA. It is important during the early stages of 50S assembly. It makes multiple contacts with different domains of the 23S rRNA in the assembled 50S subunit and ribosome. Its function is as follows. Forms part of the polypeptide exit tunnel. The polypeptide is Large ribosomal subunit protein uL4 (Sinorhizobium fredii (strain NBRC 101917 / NGR234)).